The primary structure comprises 208 residues: Thymidylate kinase (208 aa).

Residue 10-17 participates in ATP binding; that stretch reads GPDGSGKT.

The protein belongs to the thymidylate kinase family.

It carries out the reaction dTMP + ATP = dTDP + ADP. Phosphorylation of dTMP to form dTDP in both de novo and salvage pathways of dTTP synthesis. The chain is Thymidylate kinase from Listeria monocytogenes serotype 4b (strain CLIP80459).